Here is a 310-residue protein sequence, read N- to C-terminus: Carbamate kinase (310 aa).

It belongs to the carbamate kinase family.

Its subcellular location is the cytoplasm. The enzyme catalyses hydrogencarbonate + NH4(+) + ATP = carbamoyl phosphate + ADP + H2O + H(+). It participates in metabolic intermediate metabolism; carbamoyl phosphate degradation; CO(2) and NH(3) from carbamoyl phosphate: step 1/1. This Staphylococcus epidermidis (strain ATCC 35984 / DSM 28319 / BCRC 17069 / CCUG 31568 / BM 3577 / RP62A) protein is Carbamate kinase (arcC).